The primary structure comprises 479 residues: Trigger factor (479 aa).

The PPIase FKBP-type domain maps to 174–261 (GDIAVVSFSG…LKELKTRELP (88 aa)). Residues 437–479 (KVLESEAKTSKPAAKSKGSKTKSTKTKTNKAKTEKPASDKTKS) form a disordered region. Residues 453-466 (KGSKTKSTKTKTNK) show a composition bias toward basic residues. A compositionally biased stretch (basic and acidic residues) spans 467–479 (AKTEKPASDKTKS).

It belongs to the FKBP-type PPIase family. Tig subfamily.

The protein localises to the cytoplasm. The catalysed reaction is [protein]-peptidylproline (omega=180) = [protein]-peptidylproline (omega=0). Functionally, involved in protein export. Acts as a chaperone by maintaining the newly synthesized protein in an open conformation. Functions as a peptidyl-prolyl cis-trans isomerase. In Prochlorococcus marinus (strain MIT 9303), this protein is Trigger factor.